A 479-amino-acid polypeptide reads, in one-letter code: Ribosomal RNA small subunit methyltransferase F (479 aa).

S-adenosyl-L-methionine is bound by residues 125–131 (AAAPGSK), Glu-149, Asp-176, and Asp-194. Residue Cys-247 is the Nucleophile of the active site.

Belongs to the class I-like SAM-binding methyltransferase superfamily. RsmB/NOP family.

The protein resides in the cytoplasm. The catalysed reaction is cytidine(1407) in 16S rRNA + S-adenosyl-L-methionine = 5-methylcytidine(1407) in 16S rRNA + S-adenosyl-L-homocysteine + H(+). In terms of biological role, specifically methylates the cytosine at position 1407 (m5C1407) of 16S rRNA. The polypeptide is Ribosomal RNA small subunit methyltransferase F (Escherichia coli (strain UTI89 / UPEC)).